Reading from the N-terminus, the 380-residue chain is Cytochrome b (380 aa).

The next 4 helical transmembrane spans lie at Phe-34–Met-54, Trp-78–Ile-99, Trp-114–Leu-134, and Phe-179–Thr-199. His-84 and His-98 together coordinate heme b. Positions 183 and 197 each coordinate heme b. Residue His-202 participates in a ubiquinone binding. A run of 4 helical transmembrane segments spans residues Ile-227–Ser-247, Leu-289–His-309, Leu-321–Ser-341, and Phe-348–Pro-368.

This sequence belongs to the cytochrome b family. In terms of assembly, the cytochrome bc1 complex contains 11 subunits: 3 respiratory subunits (MT-CYB, CYC1 and UQCRFS1), 2 core proteins (UQCRC1 and UQCRC2) and 6 low-molecular weight proteins (UQCRH/QCR6, UQCRB/QCR7, UQCRQ/QCR8, UQCR10/QCR9, UQCR11/QCR10 and a cleavage product of UQCRFS1). This cytochrome bc1 complex then forms a dimer. It depends on heme b as a cofactor.

It is found in the mitochondrion inner membrane. Its function is as follows. Component of the ubiquinol-cytochrome c reductase complex (complex III or cytochrome b-c1 complex) that is part of the mitochondrial respiratory chain. The b-c1 complex mediates electron transfer from ubiquinol to cytochrome c. Contributes to the generation of a proton gradient across the mitochondrial membrane that is then used for ATP synthesis. The protein is Cytochrome b (MT-CYB) of Alectoris graeca (Rock partridge).